Here is an 84-residue protein sequence, read N- to C-terminus: Small ribosomal subunit protein uS17 (84 aa).

Belongs to the universal ribosomal protein uS17 family. As to quaternary structure, part of the 30S ribosomal subunit.

Its function is as follows. One of the primary rRNA binding proteins, it binds specifically to the 5'-end of 16S ribosomal RNA. In Glaesserella parasuis serovar 5 (strain SH0165) (Haemophilus parasuis), this protein is Small ribosomal subunit protein uS17.